Consider the following 130-residue polypeptide: Small ribosomal subunit protein uS8 (130 aa).

It belongs to the universal ribosomal protein uS8 family. In terms of assembly, part of the 30S ribosomal subunit. Contacts proteins S5 and S12.

In terms of biological role, one of the primary rRNA binding proteins, it binds directly to 16S rRNA central domain where it helps coordinate assembly of the platform of the 30S subunit. The sequence is that of Small ribosomal subunit protein uS8 from Photorhabdus laumondii subsp. laumondii (strain DSM 15139 / CIP 105565 / TT01) (Photorhabdus luminescens subsp. laumondii).